A 400-amino-acid polypeptide reads, in one-letter code: LIM homeobox transcription factor 1-beta.1 (400 aa).

2 consecutive LIM zinc-binding domains span residues 54-113 and 114-175; these read AVCE…LFAA and KCSG…EKDL. Residues 175–228 form a disordered region; the sequence is LLSSGSPDDSDSVKSDDEEGDVKPGKGRVNQGKGSDDGKDPRRPKRPRTILTTQ. Positions 218–277 form a DNA-binding region, homeobox; sequence PKRPRTILTTQQRRAFKASFEVSSKPCRKVRETLAAETGLSVRVVQVWFQNQRAKIKKLA.

As to expression, shows a temporal expression pattern in three main areas: neural, kidney and limbs. From stage 13 onwards, expressed in regions of the nervous system including the placodes and otic vesicles, eye, specific sets of neurons, and in discreet regions of the neural tube. From stage 13, also expressed in the presumptive pronephros, and from stage 27 expression is predominant in the capsule of the pronephric glomus. Also expressed in the developing forelimbs and hindlimbs. In metamorphosing tadpoles, expressed in the eye, brain, muscle and mesonephric kidney.

The protein localises to the nucleus. Its function is as follows. Required for early specification of the kidney glomus, lying upstream of wt1 in the pathway controlling glomus differentiation. The balance in levels and expression patterns of binding partners such as lhx1/lim-1 influences differentiation into glomus or tubule derivatives. Involved in specification of serotonergic neurons. This Xenopus laevis (African clawed frog) protein is LIM homeobox transcription factor 1-beta.1.